We begin with the raw amino-acid sequence, 399 residues long: Argininosuccinate synthase (399 aa).

Residues 10 to 18 (AYSGGVDTS) and Ala-38 each bind ATP. Residue Tyr-89 coordinates L-citrulline. Gly-119 provides a ligand contact to ATP. Positions 121, 125, and 126 each coordinate L-aspartate. Asn-125 lines the L-citrulline pocket. Positions 129, 177, 186, 262, and 274 each coordinate L-citrulline.

This sequence belongs to the argininosuccinate synthase family. Type 1 subfamily. As to quaternary structure, homotetramer.

It localises to the cytoplasm. It carries out the reaction L-citrulline + L-aspartate + ATP = 2-(N(omega)-L-arginino)succinate + AMP + diphosphate + H(+). The protein operates within amino-acid biosynthesis; L-arginine biosynthesis; L-arginine from L-ornithine and carbamoyl phosphate: step 2/3. The sequence is that of Argininosuccinate synthase from Picosynechococcus sp. (strain ATCC 27264 / PCC 7002 / PR-6) (Agmenellum quadruplicatum).